Reading from the N-terminus, the 490-residue chain is Angiopoietin-related protein 1 (490 aa).

The N-terminal stretch at 1–22 (MKAFVWTLSVLLFLLGSGHCKG) is a signal peptide. Residues 79–167 (ITRMDLENLK…LNVTTEMLKM (89 aa)) are a coiled coil. N-linked (GlcNAc...) asparagine glycosylation is found at Asn159 and Asn187. In terms of domain architecture, Fibrinogen C-terminal spans 270 to 490 (FINEGPFKDC…AVQMMIKPID (221 aa)). 2 disulfides stabilise this stretch: Cys279–Cys308 and Cys431–Cys444.

It is found in the secreted. The sequence is that of Angiopoietin-related protein 1 (Angptl1) from Mus musculus (Mouse).